The sequence spans 333 residues: Diacylglycerol acyltransferase/mycolyltransferase Ag85C (333 aa).

The N-terminal stretch at 1–44 is a signal peptide; it reads MKFLQQMRKLFGLAAKFPARLTIAVIGTALLAGLVGVVGDTAIA. Residue 86-87 coordinates substrate; it reads LR. A fibronectin-binding region spans residues 102 to 112; sequence FEEYYHSGLSV. Substrate contacts are provided by S170 and N198. The active-site Nucleophile is the S170. The active site involves E274. Residues 276-279 and 306-308 contribute to the substrate site; these read LTLS and HSW. H306 is an active-site residue.

It belongs to the mycobacterial A85 antigen family. In terms of assembly, homodimer.

Its subcellular location is the secreted. The catalysed reaction is an acyl-CoA + a 1,2-diacyl-sn-glycerol = a triacyl-sn-glycerol + CoA. It catalyses the reaction 2 alpha,alpha'-trehalose 6-mycolate = alpha,alpha'-trehalose 6,6'-bismycolate + alpha,alpha-trehalose. Functionally, the antigen 85 proteins (FbpA, FbpB, FbpC) are responsible for the high affinity of mycobacteria to fibronectin, a large adhesive glycoprotein, which facilitates the attachment of M.tuberculosis to murine alveolar macrophages (AMs). They also help to maintain the integrity of the cell wall by catalyzing the transfer of mycolic acids to cell wall arabinogalactan and through the synthesis of alpha,alpha-trehalose dimycolate (TDM, cord factor). They catalyze the transfer of a mycoloyl residue from one molecule of alpha,alpha-trehalose monomycolate (TMM) to another TMM, leading to the formation of TDM. This Mycobacterium leprae (strain TN) protein is Diacylglycerol acyltransferase/mycolyltransferase Ag85C (fbpC).